Consider the following 1323-residue polypeptide: Glutamate receptor ionotropic, NMDA 2D (1323 aa).

Positions 1–27 (MRGAGGPRGPRGPAKMLLLLALACASP) are cleaved as a signal peptide. Topologically, residues 28–579 (FPEEVPGPGA…SPSAFLEPYS (552 aa)) are extracellular. An N-linked (GlcNAc...) asparagine glycan is attached at N89. C101 and C345 are oxidised to a cystine. N-linked (GlcNAc...) asparagine glycans are attached at residues N349, N363, N381, and N464. Intrachain disulfides connect C452–C480 and C459–C481. Residues S536, T538, and R543 each contribute to the L-glutamate site. The N-linked (GlcNAc...) asparagine glycan is linked to N566. The chain crosses the membrane as a helical span at residues 580 to 601 (PAVWVMMFVMCLTVVAVTVFIF). At 602-626 (EYLSPVGYNRSLATGKRPGGSTFTI) the chain is on the cytoplasmic side. The discontinuously helical intramembrane region spans 627-638 (GKSIWLLWALVF). The pore-forming stretch occupies residues 628–647 (KSIWLLWALVFNNSVPVENP). Residues 639–650 (NNSVPVENPRGT) are Cytoplasmic-facing. A helical membrane pass occupies residues 651 to 671 (TSKIMVLVWAFFAVIFLASYT). The Extracellular portion of the chain corresponds to 672 to 840 (ANLAAFMIQE…EVMSSKLDID (169 aa)). N712 carries an N-linked (GlcNAc...) asparagine glycan. 3 residues coordinate L-glutamate: S714, T715, and D756. C770 and C825 are oxidised to a cystine. A helical membrane pass occupies residues 841-864 (NMAGVFYMLLVAMGLSLLVFAWEH). Topologically, residues 865–1323 (LVYWRLRHCL…AHFSSLESEV (459 aa)) are cytoplasmic. 3 disordered regions span residues 897–952 (EAAP…PGGA), 977–1112 (AAPR…SLGG), and 1201–1323 (PWAA…ESEV). Over residues 899-929 (APPPAKPPPPPQPLPSPAYPAARPPPGPAPF) the composition is skewed to pro residues. Basic and acidic residues predominate over residues 931 to 940 (PRERAAADRW). The span at 977–986 (AAPRGAAGRP) shows a compositional bias: low complexity. The segment covering 987–1001 (LSPPTTQPPQKPPPS) has biased composition (pro residues). The segment covering 1030–1039 (AAAAAAVGPP) has biased composition (low complexity). Positions 1080 to 1092 (TAPPPRRAAPPPC) are enriched in pro residues. A compositionally biased stretch (basic residues) spans 1208–1228 (PRRRARCGCPRPHPHRPRASH). An Omega-N-methylarginine modification is found at R1303. At S1313 the chain carries Phosphoserine. The short motif at 1321–1323 (SEV) is the PDZ-binding element.

The protein belongs to the glutamate-gated ion channel (TC 1.A.10.1) family. NR2D/GRIN2D subfamily. In terms of assembly, heterotetramer. Forms heterotetrameric channels composed of two GluN1/zeta subunits (GRIN1), and two identical GluN2/epsilon subunits (GRIN2A, GRIN2B, GRIN2C or GRIN2D) or GluN3 subunits (GRIN3A or GRIN3B) (in vitro). In vivo, the subunit composition may depend on the expression levels of the different subunits. Interacts with PDZ domains of PATJ and DLG4. As to expression, detected in neonate brain synaptosomes (at protein level).

It localises to the cell membrane. The protein localises to the postsynaptic cell membrane. It catalyses the reaction Ca(2+)(in) = Ca(2+)(out). It carries out the reaction Na(+)(in) = Na(+)(out). The enzyme catalyses K(+)(in) = K(+)(out). Functionally, component of N-methyl-D-aspartate (NMDA) receptors (NMDARs) that function as heterotetrameric, ligand-gated cation channels with high calcium permeability and voltage-dependent block by Mg(2+). Participates in synaptic plasticity for learning and memory formation. Channel activation requires binding of the neurotransmitter L-glutamate to the GluN2 subunit, glycine or D-serine binding to the GluN1 subunit, plus membrane depolarization to eliminate channel inhibition by Mg(2+). NMDARs mediate simultaneously the potasium efflux and the influx of calcium and sodium. Each GluN2 subunit confers differential attributes to channel properties, including activation, deactivation and desensitization kinetics, pH sensitivity, Ca2(+) permeability, and binding to allosteric modulators. The chain is Glutamate receptor ionotropic, NMDA 2D from Mus musculus (Mouse).